The sequence spans 273 residues: Putative pyruvate, phosphate dikinase regulatory protein (273 aa).

An ADP-binding site is contributed by 153 to 160 (GVSRTSKT).

It belongs to the pyruvate, phosphate/water dikinase regulatory protein family. PDRP subfamily.

It catalyses the reaction N(tele)-phospho-L-histidyl/L-threonyl-[pyruvate, phosphate dikinase] + ADP = N(tele)-phospho-L-histidyl/O-phospho-L-threonyl-[pyruvate, phosphate dikinase] + AMP + H(+). The catalysed reaction is N(tele)-phospho-L-histidyl/O-phospho-L-threonyl-[pyruvate, phosphate dikinase] + phosphate + H(+) = N(tele)-phospho-L-histidyl/L-threonyl-[pyruvate, phosphate dikinase] + diphosphate. In terms of biological role, bifunctional serine/threonine kinase and phosphorylase involved in the regulation of the pyruvate, phosphate dikinase (PPDK) by catalyzing its phosphorylation/dephosphorylation. This Sinorhizobium medicae (strain WSM419) (Ensifer medicae) protein is Putative pyruvate, phosphate dikinase regulatory protein.